The sequence spans 365 residues: UDP-N-acetylglucosamine--N-acetylmuramyl-(pentapeptide) pyrophosphoryl-undecaprenol N-acetylglucosamine transferase (365 aa).

UDP-N-acetyl-alpha-D-glucosamine-binding positions include 19–21, Asn131, Arg170, Ser201, Ile255, 274–279, and Gln300; these read TGG and ALTVTE.

It belongs to the glycosyltransferase 28 family. MurG subfamily.

The protein localises to the cell inner membrane. It catalyses the reaction di-trans,octa-cis-undecaprenyl diphospho-N-acetyl-alpha-D-muramoyl-L-alanyl-D-glutamyl-meso-2,6-diaminopimeloyl-D-alanyl-D-alanine + UDP-N-acetyl-alpha-D-glucosamine = di-trans,octa-cis-undecaprenyl diphospho-[N-acetyl-alpha-D-glucosaminyl-(1-&gt;4)]-N-acetyl-alpha-D-muramoyl-L-alanyl-D-glutamyl-meso-2,6-diaminopimeloyl-D-alanyl-D-alanine + UDP + H(+). It functions in the pathway cell wall biogenesis; peptidoglycan biosynthesis. Cell wall formation. Catalyzes the transfer of a GlcNAc subunit on undecaprenyl-pyrophosphoryl-MurNAc-pentapeptide (lipid intermediate I) to form undecaprenyl-pyrophosphoryl-MurNAc-(pentapeptide)GlcNAc (lipid intermediate II). The protein is UDP-N-acetylglucosamine--N-acetylmuramyl-(pentapeptide) pyrophosphoryl-undecaprenol N-acetylglucosamine transferase of Acinetobacter baylyi (strain ATCC 33305 / BD413 / ADP1).